Here is a 332-residue protein sequence, read N- to C-terminus: Ribosomal RNA small subunit methyltransferase H (332 aa).

Residues 37 to 39 (GGY), aspartate 55, phenylalanine 82, aspartate 103, and glutamine 110 contribute to the S-adenosyl-L-methionine site. Residues 281 to 332 (TKRPVTPSDEETAANPRARSAKLRAGERTAAPAQPEAPLPHWPTLASVMGRR) are disordered.

Belongs to the methyltransferase superfamily. RsmH family.

Its subcellular location is the cytoplasm. It carries out the reaction cytidine(1402) in 16S rRNA + S-adenosyl-L-methionine = N(4)-methylcytidine(1402) in 16S rRNA + S-adenosyl-L-homocysteine + H(+). Specifically methylates the N4 position of cytidine in position 1402 (C1402) of 16S rRNA. The protein is Ribosomal RNA small subunit methyltransferase H of Rhodopseudomonas palustris (strain BisA53).